The chain runs to 165 residues: Ribosome maturation factor RimM (165 aa).

The PRC barrel domain occupies 90–161 (EDEYFIVDLV…LITIRPSGEW (72 aa)).

It belongs to the RimM family. As to quaternary structure, binds ribosomal protein uS19.

It is found in the cytoplasm. Functionally, an accessory protein needed during the final step in the assembly of 30S ribosomal subunit, possibly for assembly of the head region. Essential for efficient processing of 16S rRNA. May be needed both before and after RbfA during the maturation of 16S rRNA. It has affinity for free ribosomal 30S subunits but not for 70S ribosomes. In Clostridium perfringens (strain ATCC 13124 / DSM 756 / JCM 1290 / NCIMB 6125 / NCTC 8237 / Type A), this protein is Ribosome maturation factor RimM.